A 98-amino-acid chain; its full sequence is Prostate and testis expressed protein 3 (98 aa).

Positions 1 to 20 (MNKHFLLLFSLFYFIVEATS) are cleaved as a signal peptide. In terms of domain architecture, UPAR/Ly6 spans 21–97 (LKCVTCHLRT…CCNSDFCNFR (77 aa)). Disulfide bonds link Cys-23/Cys-50, Cys-26/Cys-35, Cys-42/Cys-68, and Cys-72/Cys-88.

Belongs to the PATE family.

The protein resides in the secreted. This is Prostate and testis expressed protein 3 (Pate3) from Mus musculus (Mouse).